A 266-amino-acid chain; its full sequence is MPKGKKAKGKKVAPAPAVVKKQEAKKVVNPLFEKRPKNFGIGQDIQPKRDLTRFVKWPRYIRLQRQRSILYKRLKVPPAINQFSQALDRQTATQLLKLAHKYRPETKQEKKQRLLARAEQKAAGKGDTPTKRPPVLRAGVNTVTTLVENKKAQLVVIAHDVDPIELVVFLPALCRKMGVPYCIIKSKARLGRLVHRKTCTCVAFTQVNPEDKGALAKLVEAVKTNYNDRYDEIRRHWGGNVLGPKSVARIAKLEKAKAKELATKLG.

Residues 104 to 130 (PETKQEKKQRLLARAEQKAAGKGDTPT) are compositionally biased toward basic and acidic residues. Positions 104–135 (PETKQEKKQRLLARAEQKAAGKGDTPTKRPPV) are disordered.

This sequence belongs to the eukaryotic ribosomal protein eL8 family. As to quaternary structure, component of the large ribosomal subunit.

Its subcellular location is the cytoplasm. In terms of biological role, component of the large ribosomal subunit. The ribosome is a large ribonucleoprotein complex responsible for the synthesis of proteins in the cell. In Gallus gallus (Chicken), this protein is Large ribosomal subunit protein eL8 (RPL7A).